The sequence spans 1081 residues: Dyslexia-associated protein KIAA0319 homolog (1081 aa).

The signal sequence occupies residues 1 to 22 (MVSPPGVLSSLLLLAAMAGGSS). The MANSC domain occupies 23–99 (QQCSEGRTYS…PRTTGPIRSY (77 aa)). The Extracellular segment spans residues 23 to 964 (QQCSEGRTYS…WDGESNCEWS (942 aa)). Disordered regions lie at residues 141-160 (LPFLGKDGGPEETAEYSDDY), 168-216 (LQPS…DLTP), and 228-298 (NEST…TTVE). Composition is skewed to polar residues over residues 197–209 (ASATGDNSAASTE), 228–253 (NESTWSPTPRHSEMSSMWPSSVTASP), and 283–298 (HNPSPASLESSPTTVE). 5 consecutive PKD domains span residues 345 to 436 (AVSA…VMPA), 444 to 533 (VAIV…IRGS), 539 to 629 (VANA…VQAE), 630 to 723 (NNQA…VKKE), and 729 to 820 (RAQA…VLPD). Residues N430 and N522 are each glycosylated (N-linked (GlcNAc...) asparagine). Residues 965–985 (VFYVAALALTLTVLTGAVTWV) traverse the membrane as a helical segment. Over 986-1081 (CICCCRRRKR…VSFGYYSKDR (96 aa)) the chain is Cytoplasmic. Positions 1004-1007 (YTIL) match the Endocytosis signal motif.

As to quaternary structure, homodimer. Interacts with AP2M1; required for clathrin-mediated endocytosis. N-glycosylated. In terms of processing, O-glycosylated. Post-translationally, shedding of the extracellular domain and intramembrane cleavage produce several proteolytic products. The intramembrane cleavage releases a soluble cytoplasmic polypeptide that translocates to the nucleolus. In terms of tissue distribution, highly expressed during development in ventricular zone, intermediate zone, cortical plate, striatum, hippocampus, and brain stem.

It is found in the cell membrane. The protein resides in the early endosome membrane. Functionally, involved in neuronal migration during development of the cerebral neocortex. May function in a cell autonomous and a non-cell autonomous manner and play a role in appropriate adhesion between migrating neurons and radial glial fibers. May also regulate growth and differentiation of dendrites. The polypeptide is Dyslexia-associated protein KIAA0319 homolog (Rattus norvegicus (Rat)).